Reading from the N-terminus, the 413-residue chain is MSDFHNIRSRRRIPEASSYSTVDFDYDPDQKNHTSAVAPTSFAYSSLTTVFNASASQLWNSAQEALVSSYDTAEGTESIDADRSKVVETLESLSIFGNPLDHIIITMPSRDRTSEFRATAKSYEMKAAANGIRPQPKHEMLSESVQFNQLAKRIGKELSQTCAKMEKLAEYAKKKSCYEERSQIDHLSSIVKSDITGLNKQIGQLQEFSKRRAGNMKNQNSGHIQLVVVGLQSKLANVGKDYQSVLEISTETMKAEKNRRDKFSSGAAVPMGLPSSSSGANVRSKLLQDDEQHGSSSIALDMGALSNMQSQQTMQQRDSSLEYAQARSNTMATIEGSISELGQIFSQLASLVSEQGEMITRIDSNVEDTALNIDMAHSELVRYLQNISKNRWLMIQVFGVLMVFFVVFVLFLT.

Over 1 to 391 the chain is Cytoplasmic; it reads MSDFHNIRSR…RYLQNISKNR (391 aa). Positions 257 to 290 are disordered; the sequence is KNRRDKFSSGAAVPMGLPSSSSGANVRSKLLQDD. One can recognise a t-SNARE coiled-coil homology domain in the interval 321 to 383; that stretch reads LEYAQARSNT…DMAHSELVRY (63 aa). The chain crosses the membrane as a helical; Anchor for type IV membrane protein span at residues 392–412; sequence WLMIQVFGVLMVFFVVFVLFL. Residue threonine 413 is a topological domain, extracellular.

The protein belongs to the syntaxin family.

The protein localises to the membrane. Potentially involved in docking of synaptic vesicles at presynaptic active zones. This is Putative syntaxin-5 (syx-5) from Caenorhabditis elegans.